The chain runs to 590 residues: Regulatory solute carrier protein family 1 member 1 (590 aa).

Disordered stretches follow at residues 1–116 (MSSS…TQGL), 144–234 (EEGW…PDSE), 277–331 (SPSS…AEES), and 359–466 (EEVT…SHRT). The segment covering 16 to 35 (SSGQSPEAGNPTSLARSVSA) has biased composition (polar residues). Positions 78 to 91 (SPCAAAAAPSSAMP) are enriched in low complexity. Polar residues predominate over residues 150–161 (ENQNPSQVNDLQ). 2 stretches are compositionally biased toward basic and acidic residues: residues 162–179 (QHQEPENARHEAGPRDAP) and 188–203 (PGERQQKHEVADREAT). Low complexity predominate over residues 313-331 (SSSSVCGSSQPPAESAEES). Over residues 362-376 (TCQSEGTAWGQTRVN) the composition is skewed to polar residues. Composition is skewed to basic and acidic residues over residues 380–395 (RWTESERRTQDEDRPQ) and 404–420 (VKTEKLTDASPDTRIED). Residues 451-465 (SVTVTSAETSNQSHR) show a composition bias toward polar residues. Residues 544–584 (GFPAADIDRILRAGFTLQEALGALHRVGGNADLALLVLLAK) enclose the UBA domain.

Interacts with YRDC. In terms of tissue distribution, highly expressed in renal outer medulla, renal inner medulla, duodenum, ileum and jejunum. Moderately expressed in renal outer cortex, renal papilla, brain and liver.

It localises to the cell membrane. It is found in the nucleus. Its subcellular location is the golgi apparatus. The protein localises to the trans-Golgi network. Mediates transcriptional and post-transcriptional regulation of SLC5A1. Inhibits a dynamin and PKC-dependent exocytotic pathway of SLC5A1. Also involved in transcriptional regulation of SLC22A2. Exhibits glucose-dependent, short-term inhibition of SLC5A1 and SLC22A2 by inhibiting the release of vesicles from the trans-Golgi network. This Oryctolagus cuniculus (Rabbit) protein is Regulatory solute carrier protein family 1 member 1 (RSC1A1).